Consider the following 340-residue polypeptide: CRISPR system Cmr subunit Cmr6 (340 aa).

The protein belongs to the CRISPR system Cmr6 family. In terms of assembly, part of the type III-B Cmr ribonucleoprotein (RNP) complex, an elongated RNP with Cmr2 and Cmr3 as the base, with Cmr4 and Cmr5 forming a helical core along the mature crRNA (39 or 45 nt in length), while the complex is capped by Cmr6 and Cmr1. The 5' end of the crRNA is bound to Cmr2 and Cmr3, while Cmr6 and a Cmr1 subunit (Cmr1-1 or Cmr1-2) cap the 3' end of the crRNA. The target RNA lies antiparallel to the crRNA, with its 5' end near Cmr1 and Cmr6 and its 3' end near Cmr2 and Cmr3; major target cleavage occurs nears the junction of Cmr1/Cmr6 and Cmr4/Cmr, with minor cleavage occurring at 6 nt intervals which coincide with the proposed spacing of Cmr4 subunits. Interacts with Cmr4 and Cmr5.

It localises to the cytoplasm. In terms of biological role, CRISPR (clustered regularly interspaced short palindromic repeat), is an adaptive immune system that provides protection against mobile genetic elements (viruses, transposable elements and conjugative plasmids). CRISPR clusters contain sequences complementary to antecedent mobile elements and target invading nucleic acids. CRISPR clusters are transcribed and processed into CRISPR RNA (crRNA), formerly called psiRNA (prokaryotic silencing) in this organism. Part of the Cmr ribonucleoprotein complex which has divalent cation-dependent endoribonuclease activity specific for ssRNA complementary to the crRNA (target RNA), generating 5' hydroxy- and 3' phosphate or 2'-3' cyclic phosphate termini. Cmr4 is probably the subunit that cleaves target RNA. Cmr complex does not cleave ssDNA complementary to the crRNA. Cleavage of invading RNA is guided by the crRNA; substrate cleavage occurs a fixed distance (14 nt) from the 3' end of the crRNA. In vitro reconstitution shows Cmr1-2 and Cmr5 are not absolutely necessary for target cleavage. The polypeptide is CRISPR system Cmr subunit Cmr6 (Pyrococcus furiosus (strain ATCC 43587 / DSM 3638 / JCM 8422 / Vc1)).